A 574-amino-acid chain; its full sequence is Streptolysin O (574 aa).

Positions 1–36 (MKDMSNKKIFKKYSRVAGLLTAALIVGNLVTANADS) are cleaved as a signal peptide. A compositionally biased stretch (low complexity) spans 37-52 (NKQNTANTETTTTNEQ). Disordered stretches follow at residues 37-64 (NKQN…TTEK) and 84-111 (KEMP…HTEE). Positions 53–64 (PKPESSELTTEK) are enriched in basic and acidic residues. 4 beta stranded membrane passes run 263–276 (KSQI…NSKI), 283–292 (IDFKSISKGE), 361–370 (SNDVEAAFSA), and 378–390 (KTNG…LENS). The short motif at 532–542 (ECTGLAWEWWR) is the Conserved undecapeptide element. Residues 564-565 (TL) carry the Cholesterol binding motif.

It belongs to the cholesterol-dependent cytolysin family. As to quaternary structure, homooligomeric pore complex of 35 to 50 subunits; when inserted in the host membrane.

It is found in the secreted. The protein localises to the host cell membrane. Functionally, a cholesterol-dependent toxin that causes cytolysis by forming pores in cholesterol containing host membranes. After binding to target membranes, the protein undergoes a major conformation change, leading to its insertion in the host membrane and formation of an oligomeric pore complex. Cholesterol is required for binding to host membranes, membrane insertion and pore formation; cholesterol binding is mediated by a Thr-Leu pair in the C-terminus. Can be reversibly inactivated by oxidation. The sequence is that of Streptolysin O (slo) from Streptococcus canis.